The sequence spans 464 residues: Argininosuccinate lyase (464 aa).

This sequence belongs to the lyase 1 family. Argininosuccinate lyase subfamily.

It localises to the cytoplasm. The catalysed reaction is 2-(N(omega)-L-arginino)succinate = fumarate + L-arginine. Its pathway is amino-acid biosynthesis; L-arginine biosynthesis; L-arginine from L-ornithine and carbamoyl phosphate: step 3/3. The polypeptide is Argininosuccinate lyase (Crocosphaera subtropica (strain ATCC 51142 / BH68) (Cyanothece sp. (strain ATCC 51142))).